The primary structure comprises 160 residues: MGEIAIRLLVTGGKATPGPPIGPALSPFKINPGKVVAEINKLTKEYEGLPVPVEIIINPETKEYKIIVGLPPTSALLMKAAGVTRGPQRTVHEWVGNVSMKDVVEIAKKKIDSMPTSSLKAAVKSVLGTARATGIKVENKDPKEVTKEVDEGKWDHIINE.

The protein belongs to the universal ribosomal protein uL11 family. As to quaternary structure, part of the ribosomal stalk of the 50S ribosomal subunit. Interacts with L10 and the large rRNA to form the base of the stalk. L10 forms an elongated spine to which L12 dimers bind in a sequential fashion forming a multimeric L10(L12)X complex.

Its function is as follows. Forms part of the ribosomal stalk which helps the ribosome interact with GTP-bound translation factors. This Nanoarchaeum equitans (strain Kin4-M) protein is Large ribosomal subunit protein uL11.